The chain runs to 261 residues: Transmembrane protein 187 (261 aa).

6 helical membrane passes run 8 to 28 (AFVH…TGIF), 43 to 63 (APVA…VNMA), 88 to 108 (VFAA…WTQW), 113 to 133 (VLDQ…CLYL), 140 to 162 (WLFL…HPQG), and 190 to 210 (SATY…LKLC).

In terms of tissue distribution, ubiquitous.

The protein resides in the membrane. This chain is Transmembrane protein 187 (TMEM187), found in Homo sapiens (Human).